The primary structure comprises 178 residues: Large ribosomal subunit protein uL6 (178 aa).

The protein belongs to the universal ribosomal protein uL6 family. As to quaternary structure, part of the 50S ribosomal subunit.

Its function is as follows. This protein binds to the 23S rRNA, and is important in its secondary structure. It is located near the subunit interface in the base of the L7/L12 stalk, and near the tRNA binding site of the peptidyltransferase center. This chain is Large ribosomal subunit protein uL6, found in Streptococcus sanguinis (strain SK36).